Reading from the N-terminus, the 108-residue chain is UPF0060 membrane protein YE2027 (108 aa).

The next 4 helical transmembrane spans lie at 6 to 26 (LLFF…YLWL), 29 to 49 (GASM…VWLL), 59 to 79 (VYAA…RVVD), and 85 to 105 (LFDW…VAGW).

It belongs to the UPF0060 family.

Its subcellular location is the cell inner membrane. The polypeptide is UPF0060 membrane protein YE2027 (Yersinia enterocolitica serotype O:8 / biotype 1B (strain NCTC 13174 / 8081)).